A 393-amino-acid polypeptide reads, in one-letter code: NAD(P)H-quinone oxidoreductase subunit H, chloroplastic (393 aa).

Belongs to the complex I 49 kDa subunit family. In terms of assembly, NDH is composed of at least 16 different subunits, 5 of which are encoded in the nucleus.

It is found in the plastid. The protein localises to the chloroplast thylakoid membrane. It carries out the reaction a plastoquinone + NADH + (n+1) H(+)(in) = a plastoquinol + NAD(+) + n H(+)(out). The enzyme catalyses a plastoquinone + NADPH + (n+1) H(+)(in) = a plastoquinol + NADP(+) + n H(+)(out). In terms of biological role, NDH shuttles electrons from NAD(P)H:plastoquinone, via FMN and iron-sulfur (Fe-S) centers, to quinones in the photosynthetic chain and possibly in a chloroplast respiratory chain. The immediate electron acceptor for the enzyme in this species is believed to be plastoquinone. Couples the redox reaction to proton translocation, and thus conserves the redox energy in a proton gradient. In Lolium perenne (Perennial ryegrass), this protein is NAD(P)H-quinone oxidoreductase subunit H, chloroplastic.